The primary structure comprises 508 residues: Flavonoid 3'-monooxygenase CYP75B137 (508 aa).

Residues 2–22 (LTFFFLWISTLLLSSFIVYLL) form a helical membrane-spanning segment. Heme is bound at residue Cys-445.

It belongs to the cytochrome P450 family. It depends on heme as a cofactor. As to expression, expressed in young cromes.

It localises to the membrane. The catalysed reaction is a 3'-unsubstituted flavone + reduced [NADPH--hemoprotein reductase] + O2 = a 3'-hydroxyflavone + oxidized [NADPH--hemoprotein reductase] + H2O + H(+). The enzyme catalyses (2S)-naringenin + reduced [NADPH--hemoprotein reductase] + O2 = (S)-eriodictyol + oxidized [NADPH--hemoprotein reductase] + H2O + H(+). It carries out the reaction (2R,3R)-dihydrokaempferol + reduced [NADPH--hemoprotein reductase] + O2 = (2R,3R)-dihydroquercetin + oxidized [NADPH--hemoprotein reductase] + H2O + H(+). It catalyses the reaction kaempferol + reduced [NADPH--hemoprotein reductase] + O2 = quercetin + oxidized [NADPH--hemoprotein reductase] + H2O + H(+). The protein operates within flavonoid metabolism. Functionally, flavonoid 3'-hydroxylase that catalyzes the 3'-hydroxylation of flavanones, dihydroflavonols and flavonols. Converts narigenin to eriodictyol, dihydrokaempferol to dihydroquercetin and kaempferol to quercetin. The sequence is that of Flavonoid 3'-monooxygenase CYP75B137 from Crocosmia x crocosmiiflora (Montbretia).